The primary structure comprises 1054 residues: Carbamoyl phosphate synthase large chain (1054 aa).

The carboxyphosphate synthetic domain stretch occupies residues 1–402; the sequence is MPRRDDIRSI…SLLKAMASLE (402 aa). Residues arginine 129, arginine 169, glycine 175, glycine 176, arginine 208, valine 210, glutamate 215, glycine 241, valine 242, histidine 243, glutamine 285, and glutamate 299 each contribute to the ATP site. Positions 133–328 constitute an ATP-grasp 1 domain; sequence REAMERIGLR…IAKIAARLAV (196 aa). Mg(2+) is bound by residues glutamine 285, glutamate 299, and asparagine 301. Mn(2+)-binding residues include glutamine 285, glutamate 299, and asparagine 301. An oligomerization domain region spans residues 403 to 531; sequence IETRDIQARL…YYYSTYEQED (129 aa). The segment at 532-914 is carbamoyl phosphate synthetic domain; it reads EVERGENPSV…AFAKALAAAG (383 aa). The ATP-grasp 2 domain occupies 658-849; it reads GRLLRELGIP…LARLATRVLL (192 aa). ATP-binding residues include arginine 694, lysine 733, glutamate 740, glycine 765, valine 766, histidine 767, serine 768, glutamine 808, and glutamate 820. Glutamine 808, glutamate 820, and asparagine 822 together coordinate Mg(2+). Mn(2+) contacts are provided by glutamine 808, glutamate 820, and asparagine 822. One can recognise an MGS-like domain in the interval 915–1054; that stretch reads QRLPESGRVY…SLQDLYAART (140 aa). Positions 915–1054 are allosteric domain; the sequence is QRLPESGRVY…SLQDLYAART (140 aa).

It belongs to the CarB family. As to quaternary structure, composed of two chains; the small (or glutamine) chain promotes the hydrolysis of glutamine to ammonia, which is used by the large (or ammonia) chain to synthesize carbamoyl phosphate. Tetramer of heterodimers (alpha,beta)4. Requires Mg(2+) as cofactor. Mn(2+) serves as cofactor.

It catalyses the reaction hydrogencarbonate + L-glutamine + 2 ATP + H2O = carbamoyl phosphate + L-glutamate + 2 ADP + phosphate + 2 H(+). The catalysed reaction is hydrogencarbonate + NH4(+) + 2 ATP = carbamoyl phosphate + 2 ADP + phosphate + 2 H(+). It participates in amino-acid biosynthesis; L-arginine biosynthesis; carbamoyl phosphate from bicarbonate: step 1/1. The protein operates within pyrimidine metabolism; UMP biosynthesis via de novo pathway; (S)-dihydroorotate from bicarbonate: step 1/3. Its function is as follows. Large subunit of the glutamine-dependent carbamoyl phosphate synthetase (CPSase). CPSase catalyzes the formation of carbamoyl phosphate from the ammonia moiety of glutamine, carbonate, and phosphate donated by ATP, constituting the first step of 2 biosynthetic pathways, one leading to arginine and/or urea and the other to pyrimidine nucleotides. The large subunit (synthetase) binds the substrates ammonia (free or transferred from glutamine from the small subunit), hydrogencarbonate and ATP and carries out an ATP-coupled ligase reaction, activating hydrogencarbonate by forming carboxy phosphate which reacts with ammonia to form carbamoyl phosphate. The sequence is that of Carbamoyl phosphate synthase large chain from Rubrobacter xylanophilus (strain DSM 9941 / JCM 11954 / NBRC 16129 / PRD-1).